A 498-amino-acid chain; its full sequence is Glycerol kinase (498 aa).

An ADP-binding site is contributed by Thr14. ATP contacts are provided by Thr14, Thr15, and Ser16. Thr14 is a sn-glycerol 3-phosphate binding site. Arg18 is a binding site for ADP. Positions 84, 85, 136, and 245 each coordinate sn-glycerol 3-phosphate. Residues Arg84, Glu85, Tyr136, Asp245, and Gln246 each contribute to the glycerol site. Thr267 and Gly310 together coordinate ADP. ATP contacts are provided by Thr267, Gly310, Gln314, and Gly410. ADP is bound by residues Gly410 and Asn414.

This sequence belongs to the FGGY kinase family.

The catalysed reaction is glycerol + ATP = sn-glycerol 3-phosphate + ADP + H(+). It participates in polyol metabolism; glycerol degradation via glycerol kinase pathway; sn-glycerol 3-phosphate from glycerol: step 1/1. With respect to regulation, inhibited by fructose 1,6-bisphosphate (FBP). Key enzyme in the regulation of glycerol uptake and metabolism. Catalyzes the phosphorylation of glycerol to yield sn-glycerol 3-phosphate. This Rhodospirillum centenum (strain ATCC 51521 / SW) protein is Glycerol kinase.